Reading from the N-terminus, the 158-residue chain is Transcription elongation factor GreA (158 aa).

The stretch at 4–75 (EKTYPMTQEG…TQLENMIRNA (72 aa)) forms a coiled coil.

This sequence belongs to the GreA/GreB family.

Necessary for efficient RNA polymerase transcription elongation past template-encoded arresting sites. The arresting sites in DNA have the property of trapping a certain fraction of elongating RNA polymerases that pass through, resulting in locked ternary complexes. Cleavage of the nascent transcript by cleavage factors such as GreA or GreB allows the resumption of elongation from the new 3'terminus. GreA releases sequences of 2 to 3 nucleotides. This is Transcription elongation factor GreA from Bacillus cereus (strain ATCC 10987 / NRS 248).